Here is a 113-residue protein sequence, read N- to C-terminus: UPF0060 membrane protein CV_3485 (113 aa).

The next 4 membrane-spanning stretches (helical) occupy residues 12 to 32 (GLFV…WLVL), 37 to 57 (SLWL…LLTL), 67 to 87 (AAYG…VDGV), and 91 to 111 (RWDA…MLAP).

Belongs to the UPF0060 family.

The protein localises to the cell inner membrane. This Chromobacterium violaceum (strain ATCC 12472 / DSM 30191 / JCM 1249 / CCUG 213 / NBRC 12614 / NCIMB 9131 / NCTC 9757 / MK) protein is UPF0060 membrane protein CV_3485.